Reading from the N-terminus, the 223-residue chain is Neurotrophic factor BDNF precursor form (223 aa).

Residues 1 to 5 form the signal peptide; the sequence is SCMKA. Residues 6 to 114 constitute a propeptide that is removed on maturation; sequence APMKEVSIRG…AANMSMRVRR (109 aa). N-linked (GlcNAc...) asparagine glycosylation is present at N107. Disulfide bonds link C127–C194 and C172–C223.

This sequence belongs to the NGF-beta family.

Its subcellular location is the secreted. In terms of biological role, promotes the survival of neuronal populations that are all located either in the central nervous system or directly connected to it. The chain is Neurotrophic factor BDNF precursor form (BDNF) from Chilabothrus striatus (Haitian boa constrictor).